A 485-amino-acid polypeptide reads, in one-letter code: Aspartyl/glutamyl-tRNA(Asn/Gln) amidotransferase subunit B (485 aa).

Belongs to the GatB/GatE family. GatB subfamily. As to quaternary structure, heterotrimer of A, B and C subunits.

The enzyme catalyses L-glutamyl-tRNA(Gln) + L-glutamine + ATP + H2O = L-glutaminyl-tRNA(Gln) + L-glutamate + ADP + phosphate + H(+). The catalysed reaction is L-aspartyl-tRNA(Asn) + L-glutamine + ATP + H2O = L-asparaginyl-tRNA(Asn) + L-glutamate + ADP + phosphate + 2 H(+). Allows the formation of correctly charged Asn-tRNA(Asn) or Gln-tRNA(Gln) through the transamidation of misacylated Asp-tRNA(Asn) or Glu-tRNA(Gln) in organisms which lack either or both of asparaginyl-tRNA or glutaminyl-tRNA synthetases. The reaction takes place in the presence of glutamine and ATP through an activated phospho-Asp-tRNA(Asn) or phospho-Glu-tRNA(Gln). The chain is Aspartyl/glutamyl-tRNA(Asn/Gln) amidotransferase subunit B from Anaplasma marginale (strain St. Maries).